The chain runs to 152 residues: Transcriptional regulator MraZ (152 aa).

2 consecutive SpoVT-AbrB domains span residues 5-52 (ATLV…TLPE) and 81-124 (ASEC…DEQV).

This sequence belongs to the MraZ family. As to quaternary structure, forms oligomers.

The protein resides in the cytoplasm. It localises to the nucleoid. In terms of biological role, negatively regulates its own expression and that of the subsequent genes in the proximal part of the division and cell wall (dcw) gene cluster. Acts by binding directly to DNA. May also regulate the expression of genes outside the dcw cluster. In Proteus mirabilis (strain HI4320), this protein is Transcriptional regulator MraZ.